The primary structure comprises 431 residues: C4-dicarboxylate transport protein (431 aa).

The next 8 membrane-spanning stretches (helical) occupy residues 8–28 (ILYV…HFWP), 44–64 (LIKM…IAGM), 78–98 (LLYF…AAHL), 148–168 (GDIL…AAIG), 188–208 (IVHV…AFTI), 222–242 (LIGT…GAIA), 307–327 (IYMT…LTLL), and 355–375 (AATL…ILGI).

Belongs to the dicarboxylate/amino acid:cation symporter (DAACS) (TC 2.A.23) family.

The protein localises to the cell inner membrane. Functionally, responsible for the transport of dicarboxylates such as succinate, fumarate, and malate from the periplasm across the membrane. The polypeptide is C4-dicarboxylate transport protein (Cupriavidus pinatubonensis (strain JMP 134 / LMG 1197) (Cupriavidus necator (strain JMP 134))).